Consider the following 54-residue polypeptide: Light-harvesting protein B-880 beta chain (54 aa).

Topologically, residues 1–20 (AEDRSSLSGVSDAEAKEFHA) are cytoplasmic. Positions 19 and 37 each coordinate a bacteriochlorophyll. A helical transmembrane segment spans residues 21–43 (LFVSSFMGFMVVAVLAHVLAWAW). Residues 44–54 (RPWIPGPKGWA) lie on the Periplasmic side of the membrane.

The protein belongs to the antenna complex beta subunit family. In terms of assembly, the core complex is formed by different alpha and beta chains, binding bacteriochlorophyll molecules, and arranged most probably in tetrameric structures disposed around the reaction center. The non-pigmented gamma chains may constitute additional components.

The protein localises to the cell inner membrane. Functionally, antenna complexes are light-harvesting systems, which transfer the excitation energy to the reaction centers. The chain is Light-harvesting protein B-880 beta chain from Rhodoblastus acidophilus (Rhodopseudomonas acidophila).